A 118-amino-acid chain; its full sequence is V-type proton ATPase subunit G 3 (118 aa).

Residues 1 to 12 (MTSQSQGIQQLL) show a composition bias toward polar residues. Residues 1 to 44 (MTSQSQGIQQLLQAEKRAKDKLDEAKKRKGKRLRQAKEEAVAET) are disordered. Residues 5-53 (SQGIQQLLQAEKRAKDKLDEAKKRKGKRLRQAKEEAVAETDQYRMQMEK) are a coiled coil. Residues 14–26 (AEKRAKDKLDEAK) show a composition bias toward basic and acidic residues.

It belongs to the V-ATPase G subunit family. As to quaternary structure, V-ATPase is a heteromultimeric enzyme made up of two complexes: the ATP-hydrolytic V1 complex and the proton translocation V0 complex. The V1 complex consists of three catalytic AB heterodimers that form a heterohexamer, three peripheral stalks each consisting of EG heterodimers, one central rotor including subunits D and F, and the regulatory subunits C and H. The proton translocation complex V0 consists of the proton transport subunit a, a ring of proteolipid subunits c9c'', rotary subunit d, subunits e and f, and the accessory subunits ATP6AP1/Ac45 and ATP6AP2/PRR. In terms of tissue distribution, kidney.

Subunit of the V1 complex of vacuolar(H+)-ATPase (V-ATPase), a multisubunit enzyme composed of a peripheral complex (V1) that hydrolyzes ATP and a membrane integral complex (V0) that translocates protons. V-ATPase is responsible for acidifying and maintaining the pH of intracellular compartments and in some cell types, is targeted to the plasma membrane, where it is responsible for acidifying the extracellular environment. The sequence is that of V-type proton ATPase subunit G 3 (Atp6v1g3) from Mus musculus (Mouse).